A 122-amino-acid chain; its full sequence is Large ribosomal subunit protein uL14 (122 aa).

The protein belongs to the universal ribosomal protein uL14 family. In terms of assembly, part of the 50S ribosomal subunit. Forms a cluster with proteins L3 and L19. In the 70S ribosome, L14 and L19 interact and together make contacts with the 16S rRNA in bridges B5 and B8.

Functionally, binds to 23S rRNA. Forms part of two intersubunit bridges in the 70S ribosome. In Buchnera aphidicola subsp. Schizaphis graminum (strain Sg), this protein is Large ribosomal subunit protein uL14.